We begin with the raw amino-acid sequence, 297 residues long: UTP--glucose-1-phosphate uridylyltransferase (297 aa).

Belongs to the UDPGP type 2 family.

The enzyme catalyses alpha-D-glucose 1-phosphate + UTP + H(+) = UDP-alpha-D-glucose + diphosphate. Its pathway is carbohydrate metabolism; nucleotide-sugar metabolism. The protein operates within bacterial outer membrane biogenesis; lipopolysaccharide biosynthesis. Functionally, may play a role in stationary phase survival. In Salmonella typhimurium (strain LT2 / SGSC1412 / ATCC 700720), this protein is UTP--glucose-1-phosphate uridylyltransferase (galF).